Here is a 102-residue protein sequence, read N- to C-terminus: Small ribosomal subunit protein uS10 (102 aa).

It belongs to the universal ribosomal protein uS10 family. In terms of assembly, part of the 30S ribosomal subunit.

In terms of biological role, involved in the binding of tRNA to the ribosomes. This chain is Small ribosomal subunit protein uS10, found in Leifsonia xyli subsp. xyli (strain CTCB07).